A 283-amino-acid polypeptide reads, in one-letter code: Bifunctional protein FolD (283 aa).

NADP(+)-binding positions include 165 to 167 (GRS), serine 190, and isoleucine 231.

This sequence belongs to the tetrahydrofolate dehydrogenase/cyclohydrolase family. In terms of assembly, homodimer.

The catalysed reaction is (6R)-5,10-methylene-5,6,7,8-tetrahydrofolate + NADP(+) = (6R)-5,10-methenyltetrahydrofolate + NADPH. The enzyme catalyses (6R)-5,10-methenyltetrahydrofolate + H2O = (6R)-10-formyltetrahydrofolate + H(+). It participates in one-carbon metabolism; tetrahydrofolate interconversion. Its function is as follows. Catalyzes the oxidation of 5,10-methylenetetrahydrofolate to 5,10-methenyltetrahydrofolate and then the hydrolysis of 5,10-methenyltetrahydrofolate to 10-formyltetrahydrofolate. This is Bifunctional protein FolD from Janthinobacterium sp. (strain Marseille) (Minibacterium massiliensis).